The sequence spans 147 residues: Prefoldin subunit alpha (147 aa).

This sequence belongs to the prefoldin subunit alpha family. In terms of assembly, heterohexamer of two alpha and four beta subunits.

It is found in the cytoplasm. Functionally, molecular chaperone capable of stabilizing a range of proteins. Seems to fulfill an ATP-independent, HSP70-like function in archaeal de novo protein folding. This is Prefoldin subunit alpha (pfdA) from Saccharolobus solfataricus (strain ATCC 35092 / DSM 1617 / JCM 11322 / P2) (Sulfolobus solfataricus).